Consider the following 72-residue polypeptide: UPF0346 protein GTNG_1419 (72 aa).

The protein belongs to the UPF0346 family.

The sequence is that of UPF0346 protein GTNG_1419 from Geobacillus thermodenitrificans (strain NG80-2).